The sequence spans 450 residues: FAD-linked oxidoreductase penO (450 aa).

Positions 32-203 (PPELPYAIVK…TRFFIRTRPA (172 aa)) constitute an FAD-binding PCMH-type domain.

It belongs to the oxygen-dependent FAD-linked oxidoreductase family. It depends on FAD as a cofactor.

It participates in secondary metabolite biosynthesis. Its function is as follows. FAD-linked oxidoreductase; part of the gene cluster that mediates the biosynthesis of the indole diterpenes penitrems. The geranylgeranyl diphosphate (GGPP) synthase penG catalyzes the first step in penitrem biosynthesis via conversion of farnesyl pyrophosphate and isopentyl pyrophosphate into geranylgeranyl pyrophosphate (GGPP). Condensation of indole-3-glycerol phosphate with GGPP by the prenyl transferase penC then forms 3-geranylgeranylindole (3-GGI). Epoxidation by the FAD-dependent monooxygenase penM leads to a epoxidized-GGI that is substrate of the terpene cyclase penB for cyclization to yield paspaline. Paspaline is subsequently converted to 13-desoxypaxilline by the cytochrome P450 monooxygenase penP, the latter being then converted to paxilline by the cytochrome P450 monooxygenase penQ. Paxilline is converted to beta-paxitriol via C-10 ketoreduction by the short-chain dehydrogenase PC-15 which can be monoprenylated at the C-20 by the indole diterpene prenyltransferase penD. A two-step elimination (acetylation and elimination) process performed by the O-acetyltransferase PC-16 and the P.simplicissimum ptmI-ortholog not yet identified in P.crustosum, leads to the production of the prenylated form of penijanthine. The FAD-linked oxidoreductase ptmO then converts the prenylated form of penijanthine into PC-M5 which is in turn transformed into PC-M4 by the aromatic dimethylallyltransferase PC-22. A series of oxidation steps involving 4 cytochrome P450 monooxygenases (PC-21, PC-05, PC-23, PC-20) and a FAD-dependent monooxygenase (PC-14) are required for the transformation of PC-M4 to penitrems A and E. Synthesis of these final products is proposed to proceed via penitrems D and C (PC-21, PC-05, PC-14) and penitrems B and F (PC-21, PC-05, PC-14, PC-23). This Penicillium crustosum (Blue mold fungus) protein is FAD-linked oxidoreductase penO.